The following is a 296-amino-acid chain: Formylmethanofuran--tetrahydromethanopterin formyltransferase-like protein (296 aa).

It belongs to the FTR family.

The protein is Formylmethanofuran--tetrahydromethanopterin formyltransferase-like protein (ehaS) of Methanothermobacter marburgensis (strain ATCC BAA-927 / DSM 2133 / JCM 14651 / NBRC 100331 / OCM 82 / Marburg) (Methanobacterium thermoautotrophicum).